We begin with the raw amino-acid sequence, 456 residues long: Argininosuccinate lyase (456 aa).

It belongs to the lyase 1 family. Argininosuccinate lyase subfamily.

The protein localises to the cytoplasm. The catalysed reaction is 2-(N(omega)-L-arginino)succinate = fumarate + L-arginine. The protein operates within amino-acid biosynthesis; L-arginine biosynthesis; L-arginine from L-ornithine and carbamoyl phosphate: step 3/3. This Listeria monocytogenes serovar 1/2a (strain ATCC BAA-679 / EGD-e) protein is Argininosuccinate lyase.